The primary structure comprises 2249 residues: Endoribonuclease Dcr-1 (2249 aa).

An essential for miRNA substrate recognition region spans residues 1 to 371; the sequence is MAFHWCDNNL…SPKVRRLLQT (371 aa). An important for interaction with loqs isoform PB (loqs-PB) region spans residues 1 to 690; the sequence is MAFHWCDNNL…SKQPPTACDI (690 aa). The helicase domain stretch occupies residues 1–761; the sequence is MAFHWCDNNL…AEIDTAHSLA (761 aa). The necessary for processing certain pre-miRNas, such as pre-let 7 and pre-bantam stretch occupies residues 1 to 1042; sequence MAFHWCDNNL…VSLELAKERV (1042 aa). ATP is bound at residue 37–44; sequence LGHRSSKE. Residues 371–491 are dispensable for activity and substrate recognition; sequence TLRCFKPEEV…HHRDHNDGSD (121 aa). The tract at residues 436–486 is disordered; the sequence is TTEDRQTNRSAARVTPTPTPAHAKPKPSSGANTAQPRTRRRVYTRRHHRDH. Residues 472–484 show a composition bias toward basic residues; the sequence is RTRRRVYTRRHHR. Residues 485 to 648 enclose the Helicase C-terminal domain; the sequence is DHNDGSDTLC…TGDTTEADSD (164 aa). The segment at 496–606 is essential for miRNA substrate recognition; it reads LIYCNQNHTA…VQCKGRARAA (111 aa). Residues 617–761 form a dispensable for activity and substrate recognition region; sequence SYKSPTVGSV…AEIDTAHSLA (145 aa). Disordered stretches follow at residues 640-665 and 705-757; these read GDTT…PYTF and LDTS…IDTA. Over residues 716 to 726 the composition is skewed to low complexity; sequence SMSNTSPSESS. In terms of domain architecture, Dicer dsRNA-binding fold spans 825–920; sequence AIALVNKYCA…QPIGKEGFRA (96 aa). The tract at residues 924–957 is wing domain; that stretch reads DWECFELEPEDEQIVQLSDEPRPGTTKRRQYYYK. Positions 963-1108 are platform domain; sequence FCDCRPVAGA…WQFLELIQAN (146 aa). One can recognise a PAZ domain in the interval 1100–1246; that stretch reads QFLELIQANG…LVPELCTVHP (147 aa). Positions 1147 to 2249 are essential for production of mature miRNAs from pre-miRNAs. Also important for proper formation of the siRISC complex but is dispensable for biogenesis of siRNAs; the sequence is QYFYVAEICP…KKQGLIAKKD (1103 aa). A disordered region spans residues 1314–1351; that stretch reads ESKQKESLKDDTINGKDLADVEKKPTSEETQLDKDSKD. The residue at position 1423 (serine 1423) is a Phosphoserine. The segment at 1426-1477 is disordered; sequence FWDVSNGESGFKGPKSSQNKQGGKGKAKGPAKPTFNYYDSDNSLGSSYDDDD. Positions 1437-1446 are enriched in low complexity; that stretch reads KGPKSSQNKQ. Residues 1462-1471 are compositionally biased toward polar residues; sequence YYDSDNSLGS. RNase III domains follow at residues 1698-1919 and 1993-2150; these read ITSA…IECG and FEEF…LDSN. Glutamate 1745 and aspartate 1749 together coordinate Mg(2+). 2 positions are modified to phosphoserine: serine 1877 and serine 1880. Residues aspartate 1905, glutamate 1908, glutamate 2032, aspartate 2136, and glutamate 2139 each contribute to the Mg(2+) site. Residues 2175–2241 form the DRBM domain; that stretch reads VPKSPIRELL…AKCALRQLKK (67 aa).

Belongs to the helicase family. Dicer subfamily. In terms of assembly, component of the miRNA-directed RISC loading complex (miRLC), composed of at least Dcr-1, AGO1 and loqs, which processes pre-miRNAs and loads the resulting miRNAs into the Argonaute 1 (AGO1)-containing RNA-induced silencing complex (miRISC). Interacts (via helicase domain) with dicing cofactor loqs isoform-PB (loqs-PB) (via DRBM 3 domain); this interaction enhances processing of pre-miRNAs by increasing substrate binding affinity of the dicer. Also able to interact with loqs isoforms PA and PC, however the relevance of such interactions are unclear in vivo. Different regions of the Dcr-1-loqs-PB heterodimer collaborate to recognize, bind and position the pre-miRNA for Dcr-1 mediated cleavage. In the absence of authentic miRNA substrates, the heterodimer favors a closed, catalytically incompetent, conformation, whereas binding of authentic pre-miRNA substrates stabilizes the relatively rare open, catalytically competent, conformation of the heterodimer. During substrate recognition, the Dcr-1 PAZ domain and pre-miRNA interact with the DRBM 1 domain of loqs-PB, which likely contributes to substrate recognition and stabilization. At the miRNA binding stage, the Dcr-1 DRBM domain and loqs-PB DRBM domains then bind the pre-miRNA in tandem to form a tight 'belt' around the pre-miRNA stem, the pre-miRNA loop is docked in the loop-binding region formed by DUF283, DRBM and part of the N terminus of Dcr-1, and the loqs-PB DRBM 1 and the wing domain of Dcr-1 act together to bind the 5' and 3' pre-miRNA termini within the PAZ and platform domains of Dcr-1. These interactions between the proteins and their pre-miRNA substrate stabilize a distorted form of the pre-miRNA and position the scissile phosphodiester bonds of the pre-miRNA at the RNase III catalytic cleavage sites of Dcr-1. Following Dcr-1 mediated cleavage, the miRNA duplex remains bound to loqs-PB DRBM 1, which dissociates from the Dcr-1 RNase III 1 domain but remains in contact with the PAZ and wing domains, suggesting that the heterodimer presents the mature miRNA to Ago2 for loading into the RNA-induced silencing complex (miRISC). Interacts with AGO2 and Fmr1 to form a RNA-induced silencing complex (siRISC), a ribonucleoprotein (RNP) complex involved in translation regulation; other components of the complex are RpL5, RpL11, AGO2 and Rm62. Interacts with piwi and vas; these interactions occur in the polar granules. It depends on Mg(2+) as a cofactor. Requires Mn(2+) as cofactor.

The protein localises to the cytoplasm. It is found in the cytosol. It catalyses the reaction Endonucleolytic cleavage to 5'-phosphomonoester.. Its activity is regulated as follows. Activity towards pre-miRNAs is not inhibited by inorganic phosphate. In terms of biological role, endoribonuclease which functions in microRNA- (miRNA) gene silencing and, independently of its ribonuclease III activity, also acts in the short interfering RNA- (siRNA) gene silencing pathway. Cleaves hairpin precursor miRNAs (pre-miRNA) to generate mature miRNAs (miRNAs) that are between twenty-one to twenty-four nucleotides in length and function in RNA silencing and post-transcriptional regulation of gene expression. Also functions in miRNA loading and assembly of the Argonaute 1 (AGO1)-containing RNA-induced silencing complex (miRISC), with the miRNAs serving as a guide to direct the miRISC to complementary RNAs to degrade them or prevent their translation. Independently of its catalytic activity, functions in the siRNA silencing pathway by promoting assembly of the siRNA-directed Argonaute 2 (AGO2)-containing RISC (siRISC). Required for the proper formation of a stable intermediate (R2) in siRISC assembly, which is formed from the R1 precursor complex (containing Dcr-2, R2D2 and the siRNA) and is used for assembly of the mature (R3) siRISC complex. It is not required for siRNA biogenesis. During embryogenesis, involved in germline fate determination. Post-transcriptionally regulates mei-P26 expression through the microRNA pathway, which in turn post-translationally regulates myc protein levels; involved in regulating cell and tissue growth. The protein is Endoribonuclease Dcr-1 of Drosophila melanogaster (Fruit fly).